A 301-amino-acid polypeptide reads, in one-letter code: Probable alpha-L-glutamate ligase (301 aa).

The region spanning 104–287 is the ATP-grasp domain; that stretch reads LQLLSRRGVG…IASQIIAFIE (184 aa). ATP contacts are provided by residues lysine 141, 178-179, aspartate 187, and 211-213; these read EF and RSN. 3 residues coordinate Mg(2+): aspartate 248, glutamate 260, and asparagine 262. Mn(2+)-binding residues include aspartate 248, glutamate 260, and asparagine 262.

Belongs to the RimK family. Mg(2+) is required as a cofactor. It depends on Mn(2+) as a cofactor.

This is Probable alpha-L-glutamate ligase from Hydrogenovibrio crunogenus (strain DSM 25203 / XCL-2) (Thiomicrospira crunogena).